Reading from the N-terminus, the 188-residue chain is MSKAGASLATCYGPVSADVIAKAENIRLLILDVDGVLSDGLIYMGNNGEELKAFNVRDGYGIRCALTSDIEVAIITGRKAKLVEDRCATLGITHLYQGQSNKLIAFSDLLEKLAIAPENVAYVGDDLIDWPVMEKVGLSVAVADAHPLLIPRADYVTRIAGGRGAVREVCDLLLLAQGKLDEAKGQSI.

Mg(2+) contacts are provided by Asp32 and Asp34. Residues Asp34, 55-59 (NVRDG), Arg63, Arg78, Arg86, and Lys102 each bind substrate. Residue Asp125 coordinates Mg(2+).

It belongs to the KdsC family. As to quaternary structure, homotetramer. The cofactor is Mg(2+).

The enzyme catalyses 3-deoxy-alpha-D-manno-2-octulosonate-8-phosphate + H2O = 3-deoxy-alpha-D-manno-oct-2-ulosonate + phosphate. It participates in carbohydrate biosynthesis; 3-deoxy-D-manno-octulosonate biosynthesis; 3-deoxy-D-manno-octulosonate from D-ribulose 5-phosphate: step 3/3. Its pathway is bacterial outer membrane biogenesis; lipopolysaccharide biosynthesis. In terms of biological role, catalyzes the hydrolysis of 3-deoxy-D-manno-octulosonate 8-phosphate (KDO 8-P) to 3-deoxy-D-manno-octulosonate (KDO) and inorganic phosphate. In Escherichia coli (strain K12), this protein is 3-deoxy-D-manno-octulosonate 8-phosphate phosphatase KdsC.